Consider the following 397-residue polypeptide: MFHRIEEALEDLKQGKVVIVCDDENRENEGDFIALAEYITPETINFMITHGRGLVCVPITEGYAERLQLEPMVAHNTDSHHTAFTVSIDHVSTTTGISAHERATTIREMLNPASKGADFNRPGHIFPLIAKEGGVLRRAGHTEAAVDLAQLCGAEPAGVICEIINEDGTMARVPDLLQCAKQFDIKMITIEDLIAYRRHHETLVTREVEITLPTDFGTFHAIGYSNSLDSKEHIALVKGDISTGDPVLVRVHSECLTGDVFGSCRCDCGPQLHAALAQIEREGKGVLLYMRQEGRGIGLLNKLRAYKLQEEGFDTVEANEKLGFPADLRDYGIGAQILKDLGLQHLRLLTNNPRKIAGLQGYDLEVIERVPLQMPAKEENKTYLQTKVNKLGHLLNL.

A DHBP synthase region spans residues 1-199; sequence MFHRIEEALE…IEDLIAYRRH (199 aa). D-ribulose 5-phosphate is bound by residues 26-27, aspartate 31, 138-142, and glutamate 162; these read RE and RAGHT. Position 27 (glutamate 27) interacts with Mg(2+). Residue histidine 141 coordinates Mg(2+). Positions 200 to 397 are GTP cyclohydrolase II; it reads HETLVTREVE…VNKLGHLLNL (198 aa). Residue 250-254 participates in GTP binding; it reads RVHSE. Cysteine 255, cysteine 266, and cysteine 268 together coordinate Zn(2+). Residues glutamine 271, 293–295, and threonine 315 each bind GTP; that span reads EGR. Aspartate 327 functions as the Proton acceptor; for GTP cyclohydrolase activity in the catalytic mechanism. Arginine 329 functions as the Nucleophile; for GTP cyclohydrolase activity in the catalytic mechanism. Residues threonine 350 and lysine 355 each coordinate GTP.

In the N-terminal section; belongs to the DHBP synthase family. This sequence in the C-terminal section; belongs to the GTP cyclohydrolase II family. The cofactor is Mg(2+). Mn(2+) is required as a cofactor. It depends on Zn(2+) as a cofactor.

It carries out the reaction D-ribulose 5-phosphate = (2S)-2-hydroxy-3-oxobutyl phosphate + formate + H(+). The catalysed reaction is GTP + 4 H2O = 2,5-diamino-6-hydroxy-4-(5-phosphoribosylamino)-pyrimidine + formate + 2 phosphate + 3 H(+). It participates in cofactor biosynthesis; riboflavin biosynthesis; 2-hydroxy-3-oxobutyl phosphate from D-ribulose 5-phosphate: step 1/1. Its pathway is cofactor biosynthesis; riboflavin biosynthesis; 5-amino-6-(D-ribitylamino)uracil from GTP: step 1/4. Catalyzes the conversion of D-ribulose 5-phosphate to formate and 3,4-dihydroxy-2-butanone 4-phosphate. Functionally, catalyzes the conversion of GTP to 2,5-diamino-6-ribosylamino-4(3H)-pyrimidinone 5'-phosphate (DARP), formate and pyrophosphate. This is Riboflavin biosynthesis protein RibBA from Bacillus cereus (strain AH187).